A 286-amino-acid polypeptide reads, in one-letter code: Glycine--tRNA ligase alpha subunit (286 aa).

Belongs to the class-II aminoacyl-tRNA synthetase family. Tetramer of two alpha and two beta subunits.

It is found in the cytoplasm. It catalyses the reaction tRNA(Gly) + glycine + ATP = glycyl-tRNA(Gly) + AMP + diphosphate. The chain is Glycine--tRNA ligase alpha subunit (glyQ) from Thermotoga maritima (strain ATCC 43589 / DSM 3109 / JCM 10099 / NBRC 100826 / MSB8).